The sequence spans 314 residues: MSWSPAFLRSEDVERYLGSSSILLPALEKALANFSSGSEGGVVQPVRTVIPVAKHQGFLGIMPVYSASEDALTTKLVTFYEGMSPTSTAPSHQTTVLFFDPSNGSLLSIMDGNIITAKRTAAVSAIATKFLKPPSSEVLCILGAGVQAYSHYEIFKEQFSFKEVRIWNRTKKNAEKFAQTVKGDVRVCSSVQEAVTGADVIITVTMATKPILFGEWVKPGAHINAVGASRPDWRELDDEIMKNCVLYVDSREAALKESGDVILSGAEIFAELGEVVKGVKPAHREKTTVFKSLGMAVEDAVAAKLVYDSWSSGK.

A 3,3',5-triiodo-L-thyronine-binding site is contributed by Arg-47. Positions 91, 92, 119, 144, 146, 147, 168, 169, 170, 173, 205, 206, and 226 each coordinate NADPH. Glu-257 provides a ligand contact to 3,3',5-triiodo-L-thyronine. NADPH is bound at residue Ser-292.

Belongs to the ornithine cyclodeaminase/mu-crystallin family. In terms of assembly, homodimer. Binds the thyroid hormone triiodothyronine (T3); T3 binding inhibits enzymatic activity. Expressed at high abundance in lens, but outside the lens it is preferentially expressed in neural tissues, retina and brain.

The protein resides in the cytoplasm. It carries out the reaction L-pipecolate + NADP(+) = Delta(1)-piperideine-2-carboxylate + NADPH + H(+). The catalysed reaction is L-pipecolate + NAD(+) = Delta(1)-piperideine-2-carboxylate + NADH + H(+). It catalyses the reaction L-proline + NADP(+) = 1-pyrroline-2-carboxylate + NADPH + H(+). The enzyme catalyses L-proline + NAD(+) = 1-pyrroline-2-carboxylate + NADH + H(+). It carries out the reaction (3R)-1,4-thiomorpholine-3-carboxylate + NAD(+) = 3,4-dehydrothiomorpholine-3-carboxylate + NADH + 2 H(+). The catalysed reaction is (3R)-1,4-thiomorpholine-3-carboxylate + NADP(+) = 3,4-dehydrothiomorpholine-3-carboxylate + NADPH + 2 H(+). It catalyses the reaction (S)-cystathionine ketimine + NADH + 2 H(+) = (3R,5S)-2,3,5,6,7-pentahydro-1,4-thiazepine-3,5-dicarboxylate + NAD(+). The enzyme catalyses (S)-cystathionine ketimine + NADPH + 2 H(+) = (3R,5S)-2,3,5,6,7-pentahydro-1,4-thiazepine-3,5-dicarboxylate + NADP(+). It carries out the reaction (R)-lanthionine ketimine + NADPH + 2 H(+) = (3R,5R)-1,4-thiomorpholine-3,5-dicarboxylate + NADP(+). The catalysed reaction is Delta(2)-thiazoline-2-carboxylate + NADPH + 2 H(+) = L-thiazolidine-2-carboxylate + NADP(+). Functionally, catalyzes the NAD(P)H-dependent reduction of imine double bonds of a number of cyclic ketimine substrates, including sulfur-containing cyclic ketimines. Under physiological conditions, it efficiently catalyzes delta(1)-piperideine-2-carboxylate (P2C) and delta(1)-pyrroline-2-carboxylate (Pyr2C) reduction, suggesting a central role in lysine and glutamate metabolism. Additional substrates are delta(2)-thiazoline-2-carboxylate (T2C), 3,4-dehydrothiomorpholine-3-carboxylate (AECK), and (R)-lanthionine ketimine (LK) that is reduced at very low rate compared to other substrates. Also catalyzes the NAD(P)H-dependent reduction of (S)-cystathionine ketimine (CysK). This Macropus fuliginosus (Western gray kangaroo) protein is Ketimine reductase mu-crystallin (CRYM).